Reading from the N-terminus, the 138-residue chain is Fusaristatin A biosynthesis cluster protein FGSG_08206 (138 aa).

One can recognise a Stress-response A/B barrel domain in the interval valine 33–phenylalanine 130.

Its pathway is secondary metabolite biosynthesis. Part of the gene cluster that mediates the biosynthesis of the lipopeptide fusaristatin A. Fusaristatin A consists of a polyketide chain linked to three amino acid residues glutamine (Gln), dehydroalanine (dehydro-Ala), and beta-aminoisobutyric acid. The biosynthesis starts with formation of a linear polyketide chain by the highly reducing polyketide synthase PKS6. The gene cluster does not contain an acyl-CoA ligase or an acyl-transferase, and it is therefore predicted that the polyketide is transferred directly to the nonribosomal peptide synthetase NRPS7. Modules 1-3 from NRPS7 incorporate dehydro-Ala, Gln, and beta-aminoisobutyric acid in the compound, which is released by cyclization. The beta-aminoisobutyric acid units are most likely not freely available to the NRPS, but can be synthesized from thymine, which requires a dehydrogenase, a monooxygenase, and an aminotransferase. The fusaristatin A cluster contains a cytochrome P450 monooxygenase (FGSG_08207) and an aminotransferase (FGSG_17085), which theoretically can perform two of the enzymatic steps. The enzymes may however also be involved in biosynthesis of dehydroalanine or modification of the polyketide. The dehydro-Ala residue can be a result of cyclization, where serine is dehydrated. The last gene of the cluster encodes a protein with an A/B barrel domain found in variable enzymes, which hampers functional prediction. This chain is Fusaristatin A biosynthesis cluster protein FGSG_08206, found in Gibberella zeae (strain ATCC MYA-4620 / CBS 123657 / FGSC 9075 / NRRL 31084 / PH-1) (Wheat head blight fungus).